A 693-amino-acid polypeptide reads, in one-letter code: Elongation factor G (693 aa).

The tr-type G domain maps to 8 to 282 (EKTRNIGIMA…AVLDYLPSPL (275 aa)). GTP is bound by residues 17-24 (AHVDAGKT), 81-85 (DTPGH), and 135-138 (NKMD).

The protein belongs to the TRAFAC class translation factor GTPase superfamily. Classic translation factor GTPase family. EF-G/EF-2 subfamily.

It localises to the cytoplasm. Catalyzes the GTP-dependent ribosomal translocation step during translation elongation. During this step, the ribosome changes from the pre-translocational (PRE) to the post-translocational (POST) state as the newly formed A-site-bound peptidyl-tRNA and P-site-bound deacylated tRNA move to the P and E sites, respectively. Catalyzes the coordinated movement of the two tRNA molecules, the mRNA and conformational changes in the ribosome. The polypeptide is Elongation factor G (Enterococcus faecalis (strain ATCC 700802 / V583)).